The primary structure comprises 222 residues: MKKMLTLLLSAGLVASIFGVMPAAAAPTVVNSTIVVPKGTTYDGQGKTFVANPSTLGDGSQAENQKPVFRLEAGATLKNVIIGAPAADGVHCYGNCNISNVVWQDVGEDALTLKSSGTVNITGGAAYKAYDKVFQINAAGTINIKNFRADDIGKLVRQNGGTTFTVNMTLDNSNISNVKDAIMRTDSSSSQGRITNTRYSKVPTLFKGFASGKTSQSGNTQY.

Residues 1-26 (MKKMLTLLLSAGLVASIFGVMPAAAA) form the signal peptide.

The protein belongs to the polysaccharide lyase 3 family. Requires Ca(2+) as cofactor.

It localises to the secreted. It catalyses the reaction Eliminative cleavage of (1-&gt;4)-alpha-D-galacturonan to give oligosaccharides with 4-deoxy-alpha-D-galact-4-enuronosyl groups at their non-reducing ends.. The enzyme catalyses Eliminative cleavage of (1-&gt;4)-alpha-D-galacturonan methyl ester to give oligosaccharides with 4-deoxy-6-O-methyl-alpha-D-galact-4-enuronosyl groups at their non-reducing ends.. It functions in the pathway glycan metabolism; pectin degradation. Its function is as follows. Catalyzes the depolymerization of both polygalacturonate and pectins with low (20-34%) and high (90%) levels of methyl esterification, with an endo mode of action. In contrast to the majority of pectate lyases, displays high activity on highly methylated pectins. Does not show xylanase and cellulase activity. In Paenibacillus amylolyticus, this protein is Pectate lyase A.